We begin with the raw amino-acid sequence, 71 residues long: uncharacterized protein (71 aa).

This is an uncharacterized protein from Dictyostelium discoideum (Social amoeba).